Here is a 204-residue protein sequence, read N- to C-terminus: Urease accessory protein UreG (204 aa).

G11–T18 is a binding site for GTP.

The protein belongs to the SIMIBI class G3E GTPase family. UreG subfamily. In terms of assembly, homodimer. UreD, UreF and UreG form a complex that acts as a GTP-hydrolysis-dependent molecular chaperone, activating the urease apoprotein by helping to assemble the nickel containing metallocenter of UreC. The UreE protein probably delivers the nickel.

The protein resides in the cytoplasm. Facilitates the functional incorporation of the urease nickel metallocenter. This process requires GTP hydrolysis, probably effectuated by UreG. This Staphylococcus aureus (strain Mu3 / ATCC 700698) protein is Urease accessory protein UreG.